Here is a 605-residue protein sequence, read N- to C-terminus: Elongation factor 4 (605 aa).

One can recognise a tr-type G domain in the interval 11 to 193 (KRIRNFSIIA…RIVTQISPPK (183 aa)). GTP is bound by residues 23–28 (DHGKST) and 140–143 (NKVD).

This sequence belongs to the TRAFAC class translation factor GTPase superfamily. Classic translation factor GTPase family. LepA subfamily.

The protein resides in the cell membrane. It catalyses the reaction GTP + H2O = GDP + phosphate + H(+). Its function is as follows. Required for accurate and efficient protein synthesis under certain stress conditions. May act as a fidelity factor of the translation reaction, by catalyzing a one-codon backward translocation of tRNAs on improperly translocated ribosomes. Back-translocation proceeds from a post-translocation (POST) complex to a pre-translocation (PRE) complex, thus giving elongation factor G a second chance to translocate the tRNAs correctly. Binds to ribosomes in a GTP-dependent manner. The sequence is that of Elongation factor 4 from Phytoplasma australiense.